Consider the following 1648-residue polypeptide: MAGGRGASGRGRAEPQESYSQRQDHELQALEAIYGSDFQDLRPDARGRVREPPEINLVLYPQGLAGEEVYVQVELQVKCPPTYPDVVPEIELKNAKGLSNESVNLLKSHLEELAKKQCGEVMIFELAHHVQSFLSEHNKPPPKSFHEEMLERQAQEKQQRLLEARRKEEQEQREILHEIQRRKEEIKEEKKRKEMAKQERLEITSLTNQDYASKRDPAGHRAAAILHGGSPDFVGNGKARTYSSGRSRRERQYSVCSGEPSPGSCDILHFSVGSPDQLMVHKGRCVGSDEQLGKVVYNALETATGSFVLLHEWVLQWQKMGPCLTSQEKEKIDKCKRQIQGAETEFSSLVKLSHPNIVRYFAMNSREEEDSIVIDILAEHVSGISLATHLSHSGPVPAHQLRKYTAQLLAGLDYLHSNSVVHKVLSASSVLVDAEGTVKITDYSISKRLADICKEDVFEQARVRFSDSALPYKTGKKGDVWRLGLLLLSLSQGQECGEYPVTIPSDLPADFQDFLKKCVCLDDKERWSPQQLLKHSFINPQPKLPLVEQSPEDSGGQDYIETVIPSNQLPSAAFFSETQKQFSRYFIEFEELQLLGKGAFGAVIKVQNKLDGCCYAVKRIPINPASRHFRRIKGEVTLLSRLHHENIVRYYNAWIERHERPAVPGTPPPDCTPQAQDSPATCGKTSGDTEELGSVEAAAPPPILSSSVEWSTSAERSTSTRFPVTGQDSSSDEEDEDERDGVFSQSFLPASDSDSDIIFDNEDENSKSQNQDEDCNQKDGSHEIEPSVTAEAVHYLYIQMEYCEKSTLRDTIDQGLFRDTSRLWRLFREILDGLAYIHEKGMIHRDLKPVNIFLDSDDHVKIGDFGLATDHLAFTAEGKQDDQAGDGVIKSDPSGHLTGMVGTALYVSPEVQGSTKSAYNQKVDLFSLGIIFFEMSYHPMVTASERIFVLNQLRDPTSPKFPDDFDDGEHTKQKSVISWLLNHDPAKRPTAMELLKSELLPPPQMEESELHEVLHHTLANIDGKAYRTMMSQIFCQHISPAIDYTYDSDILKGNFLIRTAKIQQLVCETIVRVFKRHGAVQLCTPLLLPRNRQIYEHNEAALFMDHSGMLVMLPFDLRVPFARYVARNNILNLKRYCIERVFRPRKLDRFHPKELLECAFDIVTSTTNSSLPTAETIYTIYEIIQEFPALQERNYSIYLNHTMLLKAILLHCGIPEDKLSQVYVILYDAVTEKLTRREVEAKFCNLSLSSNSLCRLYKFIEQKGDLQDLTPTINSLIKQKTGVAQLVKYSLKDLEDVVGLLKKLGVKLQVSINLGLVYKVQQHTGIIFQFLAFSKRRQRVVPEILAAGGRYDLLIPKFRGPQTVGPVPTAVGVSIAIDKIFAAVLNMEEPVTVSSCDLLVVSVGQMSMSRAINLTQKLWTAGITAEIMYDWSQSQEELQEYCRHHEITYVALVSDKEGSHVKVKSFEKERQTEKRVLESDLVDHVMQKLRTKVGDERNFRDASDNLAVQTLKGSFSNASGLFEIHGTTVVPNVIVLAPEKLSASTRRRHEIQVQTRLQTTLANLHQKSSEIEILAVDLPKETILQFLSLEWDADEQAFNTTVKQLLSRLPKQRYLKLVCDEIYNIKVEKKVSVLFLYSYRDDYYRILF.

A disordered region spans residues 1–26 (MAGGRGASGRGRAEPQESYSQRQDHE). An RWD domain is found at 25-137 (HELQALEAIY…HHVQSFLSEH (113 aa)). Residues 146-205 (HEEMLERQAQEKQQRLLEARRKEEQEQREILHEIQRRKEEIKEEKKRKEMAKQERLEITS) are a coiled coil. Ser230 is subject to Phosphoserine. 2 Protein kinase domains span residues 286–538 (VGSD…HSFI) and 589–1000 (FEEL…SELL). ATP contacts are provided by residues 595-603 (LGKGAFGAV) and Lys618. The interval 661–784 (PAVPGTPPPD…CNQKDGSHEI (124 aa)) is disordered. Thr666 is modified (phosphothreonine). 2 stretches are compositionally biased toward polar residues: residues 673–686 (PQAQ…GKTS) and 704–722 (LSSS…STRF). Composition is skewed to acidic residues over residues 730 to 739 (SSDEEDEDER) and 753 to 763 (SDSDIIFDNED). Residues 775 to 784 (CNQKDGSHEI) are compositionally biased toward basic and acidic residues. The active-site Proton acceptor is the Asp846. At Thr869 the chain carries Phosphothreonine. A phosphothreonine; by autocatalysis mark is found at Thr898 and Thr903. Positions 1021 to 1492 (IDGKAYRTMM…DHVMQKLRTK (472 aa)) are histidyl-tRNA synthetase-like. An N6-acetyllysine modification is found at Lys1258.

Belongs to the protein kinase superfamily. Ser/Thr protein kinase family. GCN2 subfamily. In terms of assembly, homodimer; homodimerization is important for kinase activation by uncharged tRNAs. Interacts with GCN1; this interaction stimulates EIF2AK4/GCN2 kinase activity and is impaired by IMPACT upon a variety of stress conditions, such as amino acid depletion, UV-C irradiation, proteasome inhibitor treatment and glucose deprivation. Interacts with DNAJC3; this interaction inhibits EIF2AK4/GCN2 kinase activity during endoplasmic reticulum (ER), hypothermic and amino acid-starving stress conditions. Interacts with MAP3K20; activates EIF2AK4/GCN2 kinase activity in response to moderate ribotoxic stress. Post-translationally, autophosphorylated; autophosphorylation on Thr-898 is increased upon amino acid starvation and in UV irradiation cells and inhibited in presence of IMPACT. As to expression, expressed in liver. Expressed predominantly in the hippocampal CA1 region and the dentate gyrus, and to a lesser degree in CA3 (at protein level). Expressed in liver, lung, brain, kidney, skeletal muscle and testis. Expressed weakly in heart and spleen. Expressed in the hippocampal CA1 and CA3 regions, the dentate gyrus and cerebellum. Isoform 1 is widely expressed. Isoform 1 is expressed in brain, liver, skeletal muscle and testis. Isoform 3 is expressed in lung, brain, testis, prostate and choroid plexus. Isoform 4 is expressed in muscle, lung, kidney, brain, testis and prostate.

The protein localises to the cytoplasm. The enzyme catalyses L-seryl-[protein] + ATP = O-phospho-L-seryl-[protein] + ADP + H(+). The catalysed reaction is L-threonyl-[protein] + ATP = O-phospho-L-threonyl-[protein] + ADP + H(+). (Microbial infection) Kinase activity is enhanced by alphavirus genomic RNA sequences. Kinase activity is stimulated upon binding to uncharged tRNAs. Activated by serum starvation (in vitro). Metabolic-stress sensing protein kinase that phosphorylates the alpha subunit of eukaryotic translation initiation factor 2 (EIF2S1/eIF-2-alpha) in response to low amino acid availability. Plays a role as an activator of the integrated stress response (ISR) required for adaptation to amino acid starvation. EIF2S1/eIF-2-alpha phosphorylation in response to stress converts EIF2S1/eIF-2-alpha into a global protein synthesis inhibitor, leading to a global attenuation of cap-dependent translation, and thus to a reduced overall utilization of amino acids, while concomitantly initiating the preferential translation of ISR-specific mRNAs, such as the transcriptional activator ATF4, and hence allowing ATF4-mediated reprogramming of amino acid biosynthetic gene expression to alleviate nutrient depletion. Required for the translational induction of protein kinase PRKCH following amino acid starvation. Binds uncharged tRNAs. Involved in cell cycle arrest by promoting cyclin D1 mRNA translation repression after the unfolded protein response pathway (UPR) activation or cell cycle inhibitor CDKN1A/p21 mRNA translation activation in response to amino acid deprivation. Plays a role in the consolidation of synaptic plasticity, learning as well as formation of long-term memory. Plays a role in neurite outgrowth inhibition. Plays a role in feeding behavior to maintain amino acid homeostasis; contributes to the innate aversion toward diets of imbalanced amino acid composition. Plays a proapoptotic role in response to glucose deprivation. Promotes global cellular protein synthesis repression in response to UV irradiation independently of the stress-activated protein kinase/c-Jun N-terminal kinase (SAPK/JNK) and p38 MAPK signaling pathways. In terms of biological role, (Microbial infection) Plays a role in the antiviral response against alphavirus infection; impairs early viral mRNA translation of the incoming genomic virus RNA, thus preventing alphavirus replication. Its function is as follows. (Microbial infection) Plays a role in modulating the adaptive immune response to Yellow fever virus infection; promotes dendritic cells to initiate autophagy and antigene presentation to both CD4(+) and CD8(+) T-cells under amino acid starvation. The chain is eIF-2-alpha kinase GCN2 from Mus musculus (Mouse).